A 280-amino-acid chain; its full sequence is MRGAYYVAIALLIVASCSAAEVDQTEPEKVPNNGFVTSGGTVNKMLPKRVLRGSRDLKNKWAVHAGGEDRMLNRFSNENNLLEGIDQTITKAANVMGTNRDDVIVKAAEAMTNYKQLDPTLNILNSKHQLIKPRPINVYRQALLHATPNPKKSVVAVPNDVPFVLANRLEREKSTNTVNYAGRPITQHDYLPASLSFPSTSAVAPDGQFNKQLITQKALEFDLIKRPDEVKARSSKRQRTNPMLNNMDGRELHAQPNLEEPLAPVANNMPFVWATKLGEK.

Residues 1-19 form the signal peptide; sequence MRGAYYVAIALLIVASCSA. A RxLR-dEER motif is present at residues 49 to 70; sequence RVLRGSRDLKNKWAVHAGGEDR. Positions 229 to 249 are disordered; it reads EVKARSSKRQRTNPMLNNMDG.

The protein belongs to the RxLR effector family.

Its subcellular location is the secreted. The protein resides in the host nucleus. In terms of biological role, secreted effector that completely suppresses the host cell death induced by cell death-inducing proteins. The chain is Secreted RxLR effector protein 39 from Plasmopara viticola (Downy mildew of grapevine).